The following is a 480-amino-acid chain: Dimethyl-sulfide monooxygenase (480 aa).

FMN contacts are provided by Asp-58, Thr-104, His-154, Tyr-158, and Ser-230. Positions 423–480 (QDSYKPGSLRRKLIGTNDGRVESTHPAAQYRDAYVGKESVADRTQPSPFANAKAPVAE) are disordered.

The protein belongs to the NtaA/SnaA/DszA monooxygenase family. In terms of assembly, heterodimer of 2 subunits, DmoA and DmoB. The cofactor is FMN.

It catalyses the reaction dimethyl sulfide + NADH + O2 + H(+) = methanethiol + formaldehyde + NAD(+) + H2O. Inhibited by umbelliferone, 8-anilinonaphthalenesulfonate, a range of metal-chelating agents, and Hg(2+), Cd(2+) and Pb(2+) ions. Functionally, monooxygenase that mediates oxidation of dimethyl sulfide, the first step in dimethyl sulfide degradation pathway. Has much lower activity with diethyl sulfide and other short-chain alkyl methyl sulfides. This chain is Dimethyl-sulfide monooxygenase (dmoA), found in Hyphomicrobium sulfonivorans.